A 300-amino-acid polypeptide reads, in one-letter code: F-box/LRR-repeat protein 15 (300 aa).

The residue at position 1 (Met-1) is an N-acetylmethionine. Residues 19-66 (LLDLPWEDVLLPHVLNWVPLRQLLRLQRVSRAFRALVQLHLARLRRFD) form the F-box domain. An interaction with SMURF1 region spans residues 113–269 (NPQLRSVALA…EPSLSRLRKR (157 aa)). LRR repeat units follow at residues 141-162 (RLQRLSLAHCDWVDGLALRGLA), 167-188 (ALEELDLTACRQLKDEAIVYLA), 194-215 (GLRSLSLAVNANVGDTAVQELA), 220-241 (QLEHLDLTGCLRVGSDGVRTLA), and 246-267 (ALRSLRVRHCHHVAEPSLSRLR).

It belongs to the FBXL15 family. In terms of assembly, part of the SCF (SKP1-CUL1-F-box) E3 ubiquitin-protein ligase complex SCF(FBXL15) composed of CUL1, SKP1, RBX1 and FBXL15. In terms of tissue distribution, expressed in heart, liver, spleen, bone, muscle, brain and kidney (at protein level).

It is found in the cytoplasm. The protein operates within protein modification; protein ubiquitination. Substrate recognition component of a SCF (SKP1-CUL1-F-box protein) E3 ubiquitin-protein ligase complex which mediates the ubiquitination and subsequent proteasomal degradation of SMURF1, thereby acting as a positive regulator of the BMP signaling pathway. Required for dorsal/ventral pattern formation and bone mass maintenance. Also mediates ubiquitination of SMURF2 and WWP2. The chain is F-box/LRR-repeat protein 15 (Fbxl15) from Mus musculus (Mouse).